The sequence spans 149 residues: Large ribosomal subunit protein bL9 (149 aa).

This sequence belongs to the bacterial ribosomal protein bL9 family.

In terms of biological role, binds to the 23S rRNA. The chain is Large ribosomal subunit protein bL9 from Geobacillus thermodenitrificans (strain NG80-2).